The primary structure comprises 324 residues: Transcriptional regulator protein Pur-beta (324 aa).

The disordered stretch occupies residues 1–47 (MADGDSGSERGGGGGGGGGPGGFQPAPRGGGGGGGGPGGEQETQELA). An N-acetylalanine modification is found at A2. Phosphoserine occurs at positions 6 and 8. The span at 9–39 (ERGGGGGGGGGPGGFQPAPRGGGGGGGGPGG) shows a compositional bias: gly residues. An Omega-N-methylarginine modification is found at R28. The interval 37-263 (PGGEQETQEL…GVFLRVSEVK (227 aa)) is DNA-binding. Phosphothreonine is present on T43. S113 bears the Phosphoserine mark. At R164 the chain carries Omega-N-methylarginine. An N6-acetyllysine modification is found at K279. Residues 297-307 (RQRDKLYERRG) are compositionally biased toward basic and acidic residues. The segment at 297–324 (RQRDKLYERRGGGSGGGDESEGEEVDED) is disordered. The residue at position 306 (R306) is an Omega-N-methylarginine. Phosphoserine occurs at positions 310 and 316. The span at 314 to 324 (DESEGEEVDED) shows a compositional bias: acidic residues.

Belongs to the PUR DNA-binding protein family. Homodimer, heterodimer with PURA and heterotrimer with PURA and YBX1/Y-box protein 1. Interacts with MYOCD and SRF.

Its subcellular location is the nucleus. Transcriptional regulator which can act as an activator or a repressor. Represses the transcription of ACTA2 in fibroblasts and smooth muscle cells via its ability to interact with the purine-rich strand of a MCAT-containing element in the 5' flanking region of the gene. Represses the transcription of MYOCD, capable of repressing all isoforms of MYOCD but the magnitude of the repressive effects is most notable for the SMC-specific isoforms. Promotes hepatic glucose production by activating the transcription of ADCY6, leading to cAMP accumulation, increased PKA activity, CREB activation, and increased transcription of PCK1 and G6PC genes. Has capacity to bind repeated elements in single-stranded DNA such as the purine-rich single strand of the PUR element located upstream of the MYC gene. Participates in transcriptional and translational regulation of alpha-MHC expression in cardiac myocytes by binding to the purine-rich negative regulatory (PNR) element. Modulates constitutive liver galectin-3 gene transcription by binding to its promoter. May play a role in the dendritic transport of a subset of mRNAs. This chain is Transcriptional regulator protein Pur-beta (Purb), found in Mus musculus (Mouse).